A 583-amino-acid chain; its full sequence is Epsin-2 (583 aa).

Residues Arg8, Lys11, Arg25, Asn30, Arg63, and His73 each coordinate a 1,2-diacyl-sn-glycero-3-phospho-(1D-myo-inositol-4,5-bisphosphate). The ENTH domain maps to 12–144 (NIVNSYSEAE…KDEERLKVER (133 aa)). Positions 165–181 (QITFGRGSSQPNLSISH) are enriched in polar residues. Residues 165–217 (QITFGRGSSQPNLSISHSEQEYGKAGGSPASYHGSTSPRVSSELEQARPQTSG) are disordered. An Omega-N-methylarginine modification is found at Arg170. A phosphoserine mark is found at Ser173, Ser192, and Ser195. Over residues 197 to 216 (HGSTSPRVSSELEQARPQTS) the composition is skewed to polar residues. UIM domains follow at residues 218-237 (EEEL…AEQE) and 243-262 (GDDL…TVKV). 2 disordered regions span residues 293 to 384 (SGPV…KPSP) and 411 to 457 (TSKK…PESF). Repeat copies occupy residues 301 to 303 (EPW), 313 to 315 (NPW), 326 to 328 (DPW), and 340 to 342 (DPW). A compositionally biased stretch (polar residues) spans 301–315 (EPWSTGTPANQTNPW). Positions 301-377 (EPWSTGTPAN…SDAGKTADAW (77 aa)) are 6 X 3 AA repeats of [DE]-P-W. Polar residues predominate over residues 346-355 (TTASIQSVPK). Tandem repeats lie at residues 358–360 (DPW) and 375–377 (DAW). Position 431 is a phosphoserine (Ser431). Residues 437-448 (SQSLTSASSKPS) are compositionally biased toward low complexity. Phosphothreonine is present on Thr453. 2 repeat units span residues 482 to 484 (NPF) and 496 to 498 (NPF). The 3 X 3 AA repeats of N-P-F stretch occupies residues 482–581 (NPFLAPGAAA…AQPAGTTNPF (100 aa)). Ser514 carries the post-translational modification Phosphoserine. Repeat unit 3 spans residues 579–581 (NPF).

It belongs to the epsin family. In terms of assembly, binds AP-2 and clathrin. Interacts with ITSN1. Interacts with UBQLN2. Binds EPS15. Post-translationally, ubiquitinated. As to expression, highly expressed in brain. Detected at lower levels in lung, liver, muscle and testis.

The protein localises to the cytoplasm. Its function is as follows. Plays a role in the formation of clathrin-coated invaginations and endocytosis. The chain is Epsin-2 (Epn2) from Rattus norvegicus (Rat).